Reading from the N-terminus, the 261-residue chain is Cytochrome c oxidase subunit 3 (261 aa).

The Mitochondrial matrix portion of the chain corresponds to 1–15; the sequence is MTHQTHAYHMVNPSP. The chain crosses the membrane as a helical span at residues 16-34; sequence WPLTGALSALLMTSGLIMW. Residues 35 to 40 lie on the Mitochondrial intermembrane side of the membrane; that stretch reads FHFNST. The helical transmembrane segment at 41 to 66 threads the bilayer; it reads TLLMLGLTTNMLTMYQWWRDIIREST. At 67–72 the chain is on the mitochondrial matrix side; the sequence is FQGHHT. The chain crosses the membrane as a helical span at residues 73-105; sequence PSVQKGLRYGMILFIISEVLFFTGFFWAFYHSS. The Mitochondrial intermembrane portion of the chain corresponds to 106–128; the sequence is LAPTPELGGCWPPTGIHPLNPLE. A helical membrane pass occupies residues 129 to 152; the sequence is VPLLNTSVLLASGVSITWAHHSLM. At 153–155 the chain is on the mitochondrial matrix side; the sequence is EGN. Residues 156–183 form a helical membrane-spanning segment; that stretch reads RNHMLQALFITIALGVYFTLLQASEYYE. Residues 184-190 lie on the Mitochondrial intermembrane side of the membrane; sequence APFTISD. Residues 191 to 223 traverse the membrane as a helical segment; sequence GVYGSTFFVATGFHGLHVIIGSTFLIVCFFRQL. The Mitochondrial matrix segment spans residues 224 to 232; that stretch reads KFHFTSNHH. The helical transmembrane segment at 233–256 threads the bilayer; it reads FGFEAAAWYWHFVDVVWLFLYVSI. At 257–261 the chain is on the mitochondrial intermembrane side; the sequence is YWWGS.

This sequence belongs to the cytochrome c oxidase subunit 3 family. In terms of assembly, component of the cytochrome c oxidase (complex IV, CIV), a multisubunit enzyme composed of 14 subunits. The complex is composed of a catalytic core of 3 subunits MT-CO1, MT-CO2 and MT-CO3, encoded in the mitochondrial DNA, and 11 supernumerary subunits COX4I, COX5A, COX5B, COX6A, COX6B, COX6C, COX7A, COX7B, COX7C, COX8 and NDUFA4, which are encoded in the nuclear genome. The complex exists as a monomer or a dimer and forms supercomplexes (SCs) in the inner mitochondrial membrane with NADH-ubiquinone oxidoreductase (complex I, CI) and ubiquinol-cytochrome c oxidoreductase (cytochrome b-c1 complex, complex III, CIII), resulting in different assemblies (supercomplex SCI(1)III(2)IV(1) and megacomplex MCI(2)III(2)IV(2)).

The protein localises to the mitochondrion inner membrane. It carries out the reaction 4 Fe(II)-[cytochrome c] + O2 + 8 H(+)(in) = 4 Fe(III)-[cytochrome c] + 2 H2O + 4 H(+)(out). Its function is as follows. Component of the cytochrome c oxidase, the last enzyme in the mitochondrial electron transport chain which drives oxidative phosphorylation. The respiratory chain contains 3 multisubunit complexes succinate dehydrogenase (complex II, CII), ubiquinol-cytochrome c oxidoreductase (cytochrome b-c1 complex, complex III, CIII) and cytochrome c oxidase (complex IV, CIV), that cooperate to transfer electrons derived from NADH and succinate to molecular oxygen, creating an electrochemical gradient over the inner membrane that drives transmembrane transport and the ATP synthase. Cytochrome c oxidase is the component of the respiratory chain that catalyzes the reduction of oxygen to water. Electrons originating from reduced cytochrome c in the intermembrane space (IMS) are transferred via the dinuclear copper A center (CU(A)) of subunit 2 and heme A of subunit 1 to the active site in subunit 1, a binuclear center (BNC) formed by heme A3 and copper B (CU(B)). The BNC reduces molecular oxygen to 2 water molecules using 4 electrons from cytochrome c in the IMS and 4 protons from the mitochondrial matrix. The polypeptide is Cytochrome c oxidase subunit 3 (MT-CO3) (Pelea capreolus (Gray rhebok)).